The primary structure comprises 62 residues: Large ribosomal subunit protein bL35 (62 aa).

The segment covering 1–26 (MPKMKTKSGLKKRIKITATGKVKRGN) has biased composition (basic residues). The disordered stretch occupies residues 1–62 (MPKMKTKSGL…SDFKRYKELI (62 aa)). The segment covering 53 to 62 (SDFKRYKELI) has biased composition (basic and acidic residues).

It belongs to the bacterial ribosomal protein bL35 family.

In Metamycoplasma arthritidis (strain 158L3-1) (Mycoplasma arthritidis), this protein is Large ribosomal subunit protein bL35.